A 310-amino-acid chain; its full sequence is MAKVRTKDVMEQFHLELISGEEGINRPITMSDLSRPGIEIAGYFTYYPRERVQLLGKTELSFFDQLPEEDKKQRMKSLCTDVTPAIILSRDMPIPPELVEASEQNGVPVLRSPLKTTRLSSRLTNFLESRLAPTTAIHGVLVDIYGVGVLITGKSGVGKSETALELVKRGHRLVADDCVEIRQEDQDTLVGNAPDLIEHLLEIRGLGIINVMTLFGAGAVRSNKRITIVMDLELWEQGKQYDRLGLEEEKMKIIDTEITKLTIPVRPGRNLAVIIEVAAMNFRLKRMGLNAAEQFTNKLADVIEDGEQDE.

Residues His138 and Lys159 contribute to the active site. An ATP-binding site is contributed by 153-160 (GKSGVGKS). Residue Ser160 coordinates Mg(2+). Catalysis depends on Asp177, which acts as the Proton acceptor; for phosphorylation activity. Proton donor; for dephosphorylation activity. The tract at residues 201–210 (LEIRGLGIIN) is important for the catalytic mechanism of both phosphorylation and dephosphorylation. Glu202 lines the Mg(2+) pocket. Arg243 is a catalytic residue. The segment at 264 to 269 (PVRPGR) is important for the catalytic mechanism of dephosphorylation.

It belongs to the HPrK/P family. In terms of assembly, homohexamer. It depends on Mg(2+) as a cofactor.

The catalysed reaction is [HPr protein]-L-serine + ATP = [HPr protein]-O-phospho-L-serine + ADP + H(+). It carries out the reaction [HPr protein]-O-phospho-L-serine + phosphate + H(+) = [HPr protein]-L-serine + diphosphate. In terms of biological role, catalyzes the ATP- as well as the pyrophosphate-dependent phosphorylation of a specific serine residue in HPr, a phosphocarrier protein of the phosphoenolpyruvate-dependent sugar phosphotransferase system (PTS). HprK/P also catalyzes the pyrophosphate-producing, inorganic phosphate-dependent dephosphorylation (phosphorolysis) of seryl-phosphorylated HPr (P-Ser-HPr). The two antagonistic activities of HprK/P are regulated by several intracellular metabolites, which change their concentration in response to the absence or presence of rapidly metabolisable carbon sources (glucose, fructose, etc.) in the growth medium. Also phosphorylates/dephosphorylates the HPr-like catabolite repression protein crh on a specific serine residue. Therefore, by controlling the phosphorylation state of HPr and crh, HPrK/P is a sensor enzyme that plays a major role in the regulation of carbon metabolism and sugar transport: it mediates carbon catabolite repression (CCR), and regulates PTS-catalyzed carbohydrate uptake and inducer exclusion. This Bacillus velezensis (strain DSM 23117 / BGSC 10A6 / LMG 26770 / FZB42) (Bacillus amyloliquefaciens subsp. plantarum) protein is HPr kinase/phosphorylase.